A 168-amino-acid polypeptide reads, in one-letter code: DAZ-associated protein 2 (168 aa).

The segment covering 1–13 (MNSKGQYPTQPTY) has biased composition (low complexity). The disordered stretch occupies residues 1–25 (MNSKGQYPTQPTYPVQPPGNPVYPQ). Positions 39 to 42 (PPAY) match the PPAY motif. Position 77 is a phosphoserine (serine 77).

In terms of assembly, interacts with SOX6. Interacts with DAZ1 and DAZL. Interacts with IL17RB. May interact with FAM168B. Interacts with INCA1. Interacts with EIF4G1 and EIF4G2. Interacts (via PPAY motif) with NEDD4 (via WW domains). Interacts with transcription factor TCF4; the interaction results in localization of DAZAP2 to the nucleus. Interacts with transcription factors TCF7 and TCF7L1. Interacts with transcription factor LEF1. Interacts with serine/threonine-protein kinase HIPK2; the interaction results in phosphorylation of DAZAP2 which causes localization of DAZAP2 to the nucleus, reduces interaction of DAZAP2 with HIPK2 and prevents DAZAP2-dependent degradation of HIPK2. Interacts with ubiquitin ligase SIAH1; the interaction is decreased following phosphorylation of DAZAP2 by HIPK2. Interacts with TP53; the interaction is triggered by DNA damage. Ubiquitinated by SMURF2, leading to proteasomal degradation. Ubiquitinated by NEDD4, leading to proteasomal degradation. In terms of processing, following DNA damage, phosphorylated by HIPK2 which promotes DAZAP2 localization to the nucleus, reduces interaction of DAZAP2 with HIPK2 and SIAH1, and prevents DAZAP2-dependent ubiquitination of HIPK2 by E3 ubiquitin-protein ligase SIAH1 and subsequent HIPK2 proteasomal degradation.

Its subcellular location is the cytoplasm. It is found in the nucleus. The protein localises to the nucleus speckle. It localises to the nuclear body. The protein resides in the stress granule. Its function is as follows. In unstressed cells, promotes SIAH1-mediated polyubiquitination and degradation of the serine/threonine-protein kinase HIPK2, probably by acting as a loading factor that potentiates complex formation between HIPK2 and ubiquitin ligase SIAH1. In response to DNA damage, localizes to the nucleus following phosphorylation by HIPK2 and modulates the expression of a subset of TP53/p53 target genes by binding to TP53 at target gene promoters. This limits the expression of a number of cell death-mediating TP53 target genes, reducing DNA damage-induced cell death. Enhances the binding of transcription factor TCF7L2/TCF4, a Wnt signaling pathway effector, to the promoters of target genes. Plays a role in stress granule formation. In Bos taurus (Bovine), this protein is DAZ-associated protein 2.